The primary structure comprises 220 residues: Deep-sea actinoporin Cjtox I (220 aa).

Positions 1 to 19 are cleaved as a signal peptide; the sequence is MNRLIILCLVAATIYSTIA. Residues 20–42 constitute a propeptide that is removed on maturation; the sequence is LPMKEDISNEERPTSVNEKPVKK. Residues S96, V128, S146, P148, Y174, Y178, and Y179 each coordinate phosphocholine. Residues 146–161 form a trp-rich region, which is important for the binding to lipid membrane region; the sequence is SVPYDYNWYSNWWNIK. A Cell attachment site, crucial for protein stability motif is present at residues 185 to 187; that stretch reads KGN.

The protein belongs to the actinoporin family. Sea anemone subfamily. In terms of assembly, octamer or nonamer in membranes. Monomer in the soluble state. In terms of tissue distribution, expressed in tentacles.

It is found in the secreted. The protein resides in the nematocyst. Its subcellular location is the target cell membrane. Functionally, probably acts in predation. Pore-forming protein that forms cations-selective hydrophilic pores of around 1 nm and causes cytolysis. Pore formation is a multi-step process that involves specific recognition of membrane sphingomyelin (but neither cholesterol nor phosphatidylcholine) using aromatic rich region and adjacent phosphocholine (POC) binding site, firm binding to the membrane (mainly driven by hydrophobic interactions) accompanied by the transfer of the N-terminal region to the lipid-water interface and finally pore formation after oligomerization of monomers. Shows hemolytic activity on equine erythrocytes. Hemolysis is moderately inhibited in presence of sphingomyelin, suggesting that this protein targets sphingomyelin. The chain is Deep-sea actinoporin Cjtox I from Cribrinopsis japonica (Deep-sea anemone).